The primary structure comprises 381 residues: Alkanesulfonate monooxygenase (381 aa).

This sequence belongs to the SsuD family. Homotetramer.

It carries out the reaction an alkanesulfonate + FMNH2 + O2 = an aldehyde + FMN + sulfite + H2O + 2 H(+). In terms of biological role, catalyzes the desulfonation of aliphatic sulfonates. The polypeptide is Alkanesulfonate monooxygenase (Shigella flexneri).